The chain runs to 122 residues: Putative cryptic phosphonate transport system permease protein PhnE2 (122 aa).

The 114-residue stretch at 1 to 114 (MLALFIHTTG…VTVSLLDFLS (114 aa)) folds into the ABC transmembrane type-1 domain. The next 4 helical transmembrane spans lie at 3-23 (ALFI…VEAI), 39-59 (LEEI…SYSL), 68-88 (SATV…WEAI), and 93-113 (FQQT…LDFL).

The protein belongs to the binding-protein-dependent transport system permease family. In terms of assembly, if the reading frame is restored, the complex is composed of two ATP-binding proteins (PhnC), two transmembrane proteins (PhnE) and a solute-binding protein (PhnD).

It is found in the cell inner membrane. Functionally, C-terminal fragment of the PhnE protein, part of a phosphonate usage operon that is cryptic in K12 strains. Growth of K12 strains on phosphonate can be observed when it is used as the sole phosphorus source after a 60 hour lag period, suggesting the operon is activated. An intact PhnE in strain B is (AC A0A140NFA3). Part of the binding-protein-dependent transport system for phosphonates; probably responsible for the translocation of the substrate across the membrane. This chain is Putative cryptic phosphonate transport system permease protein PhnE2 (phnE), found in Escherichia coli (strain K12).